The sequence spans 539 residues: MGKLLLWVGLLLMLKHHDGAAHKLVCYFTNWAFSRPGSASILPRDLDPFLCTHLVFAFASMNNNQIVPKDPLDEKILYPEFNKLKERNRGLKTLLSVGGWNFGTSRFTKMLSTFSNRERFVKSVIALLRTHGFDGLDLFFLYPGLRGSPARDRWTFVFLLEELLQAFKNEAQLTMRPRLLLSAAVSGDPHVIQKAYDARLLGRLLDFISVLSYDLHGSWEKVTGHNSPLFSLPGDPKSSAYAMSYWRQLGVPPEKLLMGLPTYGRTFHLLRASQNELGAGAAGPASPGKYTKQAGFLAYYEVCSFVQRAKKRWINDQYVPYAFKGKEWVGYDDAISFGYKAFFIKREHFGGAMVWTLDLDDFRGNFCGTGPFPLAHTLNNLLVNDEFSSTPSPKFWFSTAVNSSRIGPEMPTMTRDLTTGLGILPLGGEAVATETHRKSATMTTTPRGETATPTRTPLSSGRRTAAPEGKTESPGEKPLTSVGRLAVSPGGIAVGPVHLQIGQKVTPPGRKAGVPEKVTIPSGKMTVTPDGRAETLERL.

A signal peptide spans 1–21; that stretch reads MGKLLLWVGLLLMLKHHDGAA. Positions 22–385 constitute a GH18 domain; sequence HKLVCYFTNW…HTLNNLLVND (364 aa). Residues Cys26 and Cys51 are joined by a disulfide bond. Residues 71–72, 98–101, Tyr142, 211–214, and Trp355 contribute to the chitin site; these read PL, GGWN, and LSYD. Residue Asn402 is glycosylated (N-linked (GlcNAc...) asparagine). Disordered regions lie at residues 433–480 and 503–539; these read TETH…KPLT and QKVTPPGRKAGVPEKVTIPSGKMTVTPDGRAETLERL. Low complexity predominate over residues 440-457; sequence ATMTTTPRGETATPTRTP.

It belongs to the glycosyl hydrolase 18 family. As to expression, oviduct.

It is found in the cytoplasmic vesicle. It localises to the secretory vesicle. Functionally, binds to oocyte zona pellucida in vivo. May play a role in the fertilization process and/or early embryonic development. The protein is Oviduct-specific glycoprotein (OVGP1) of Ovis aries (Sheep).